Reading from the N-terminus, the 161-residue chain is MTDTTAASAEAAAPPQLGILTQYIKDLSFENPNAPASLSQQGKQPDITIQINVGATNLGGTDFEVMLAIEGKAMAEDKVLFALELAYAGVFRIENVPQDSLHPFVMIECPRLLFPFAREIVASATRNGGFPPLMLDPVDFVGLYRQNMARQAEQQQQSKPN.

This sequence belongs to the SecB family. As to quaternary structure, homotetramer, a dimer of dimers. One homotetramer interacts with 1 SecA dimer.

It localises to the cytoplasm. In terms of biological role, one of the proteins required for the normal export of preproteins out of the cell cytoplasm. It is a molecular chaperone that binds to a subset of precursor proteins, maintaining them in a translocation-competent state. It also specifically binds to its receptor SecA. This Afipia carboxidovorans (strain ATCC 49405 / DSM 1227 / KCTC 32145 / OM5) (Oligotropha carboxidovorans) protein is Protein-export protein SecB.